The following is a 376-amino-acid chain: Putative cytosolic 5'-nucleotidase 3 (376 aa).

Aspartate 119 acts as the Nucleophile in catalysis. Residues aspartate 119 and aspartate 121 each contribute to the Mg(2+) site. The active-site Proton donor is aspartate 121. Residues glutamate 168, serine 189, 236 to 237 (SA), and lysine 286 contribute to the substrate site. Aspartate 312 provides a ligand contact to Mg(2+).

Belongs to the pyrimidine 5'-nucleotidase family.

It is found in the cytoplasm. The enzyme catalyses a ribonucleoside 5'-phosphate + H2O = a ribonucleoside + phosphate. The polypeptide is Putative cytosolic 5'-nucleotidase 3 (Caenorhabditis elegans).